We begin with the raw amino-acid sequence, 468 residues long: BTB/POZ domain-containing protein 17 (468 aa).

The N-terminal stretch at 1–16 (MRRFCVVPLLLVLVEA) is a signal peptide. A BTB domain is found at 51–120 (TDTILRIRTA…FYCGEISVNL (70 aa)). The BACK domain maps to 159–259 (VVSWYHYALR…ISPSQLFQIQ (101 aa)).

It is found in the secreted. The polypeptide is BTB/POZ domain-containing protein 17 (btbd17) (Xenopus tropicalis (Western clawed frog)).